A 346-amino-acid polypeptide reads, in one-letter code: Glycerol-3-phosphate dehydrogenase [NAD(P)+] (346 aa).

Residues Ser-15, Trp-16, Arg-36, and Lys-110 each contribute to the NADPH site. Sn-glycerol 3-phosphate-binding residues include Lys-110, Gly-139, and Ser-141. Ala-143 lines the NADPH pocket. Sn-glycerol 3-phosphate is bound by residues Lys-194, Asp-247, Ser-257, Arg-258, and Asn-259. The Proton acceptor role is filled by Lys-194. Position 258 (Arg-258) interacts with NADPH. Positions 282 and 284 each coordinate NADPH.

Belongs to the NAD-dependent glycerol-3-phosphate dehydrogenase family.

It is found in the cytoplasm. It carries out the reaction sn-glycerol 3-phosphate + NAD(+) = dihydroxyacetone phosphate + NADH + H(+). It catalyses the reaction sn-glycerol 3-phosphate + NADP(+) = dihydroxyacetone phosphate + NADPH + H(+). It functions in the pathway membrane lipid metabolism; glycerophospholipid metabolism. Its function is as follows. Catalyzes the reduction of the glycolytic intermediate dihydroxyacetone phosphate (DHAP) to sn-glycerol 3-phosphate (G3P), the key precursor for phospholipid synthesis. The sequence is that of Glycerol-3-phosphate dehydrogenase [NAD(P)+] from Xylella fastidiosa (strain Temecula1 / ATCC 700964).